Reading from the N-terminus, the 387-residue chain is Phosphoglycerate kinase (387 aa).

Residues 21–23 (DLN), arginine 36, 59–62 (HLGR), arginine 113, and arginine 146 each bind substrate. Residues lysine 197, glutamate 314, and 340-343 (GGDT) contribute to the ATP site.

The protein belongs to the phosphoglycerate kinase family. In terms of assembly, monomer.

It is found in the cytoplasm. It carries out the reaction (2R)-3-phosphoglycerate + ATP = (2R)-3-phospho-glyceroyl phosphate + ADP. The protein operates within carbohydrate degradation; glycolysis; pyruvate from D-glyceraldehyde 3-phosphate: step 2/5. The protein is Phosphoglycerate kinase (pgk) of Vibrio cholerae serotype O1 (strain ATCC 39541 / Classical Ogawa 395 / O395).